The primary structure comprises 102 residues: Protein ORF28 (102 aa).

The chain crosses the membrane as a helical span at residues 28 to 48 (VIGLITVLFLLVIGACVYCCI).

Its subcellular location is the host membrane. The sequence is that of Protein ORF28 (ORF28) from Homo sapiens (Human).